The following is a 219-amino-acid chain: Probable transaldolase (219 aa).

Lysine 83 serves as the catalytic Schiff-base intermediate with substrate.

The protein belongs to the transaldolase family. Type 3B subfamily.

It is found in the cytoplasm. The catalysed reaction is D-sedoheptulose 7-phosphate + D-glyceraldehyde 3-phosphate = D-erythrose 4-phosphate + beta-D-fructose 6-phosphate. Its pathway is carbohydrate degradation; pentose phosphate pathway; D-glyceraldehyde 3-phosphate and beta-D-fructose 6-phosphate from D-ribose 5-phosphate and D-xylulose 5-phosphate (non-oxidative stage): step 2/3. Transaldolase is important for the balance of metabolites in the pentose-phosphate pathway. The polypeptide is Probable transaldolase (Cereibacter sphaeroides (strain ATCC 17029 / ATH 2.4.9) (Rhodobacter sphaeroides)).